Reading from the N-terminus, the 82-residue chain is Penaeidin-3d (82 aa).

The signal sequence occupies residues 1–19 (MRLVVCLVFLASFALVCQG). Gln-20 is subject to Pyrrolidone carboxylic acid. Disulfide bonds link Cys-51–Cys-66, Cys-55–Cys-73, and Cys-67–Cys-74. The residue at position 81 (Ser-81) is a Serine amide.

Belongs to the penaeidin family.

The protein localises to the cytoplasmic granule. In terms of biological role, antibacterial and antifungal activity. Presents chitin-binding activity. This is Penaeidin-3d from Penaeus vannamei (Whiteleg shrimp).